The primary structure comprises 497 residues: Vacuolar-processing enzyme (497 aa).

A signal peptide spans 1–31 (METHKSLLFFTNYVLFLVFTLSFLPIPGLLA). His-180 is an active-site residue. Catalysis depends on Cys-222, which acts as the Nucleophile. Cys-255 and Cys-269 are oxidised to a cystine. N-linked (GlcNAc...) asparagine glycans are attached at residues Asn-320 and Asn-374. 2 cysteine pairs are disulfide-bonded: Cys-433-Cys-463 and Cys-445-Cys-480.

This sequence belongs to the peptidase C13 family.

Functionally, asparagine-specific endopeptidase involved in the processing of vacuolar seed protein precursors into the mature forms. This is Vacuolar-processing enzyme from Ricinus communis (Castor bean).